The following is a 352-amino-acid chain: MGLEKLTWVSEKKPDWSNVQKLIAACEATNQYTNIGPIISQLESFIRDSFLIEESKAVIVTSNGTSALHALVGGINRQLGRELKFVTQSFTFPSSNQGPLKDSIIVDIDEDGGLDLNAVKNIEYDGIIVTNIHGNVVDINKYVDFCMNHNKLLIFDNAATGYTFYLGKNSCNYGHASIISFHHTKPFGFGEGGCIIVDRLYENNIRIGLNFGLDNSLGEKSQYSNQASNYRMCDLNAAFILSYLQNNYKKIINRHSEIYEIYKNNLPKRFKLFPNHSKKNPVCSSICLLFDKPFRLDKIPFLSRKYYKPLDLSSPVSLDFYQRILCIPCNIDLTDRQIYEIIGVLNEFADKN.

This is an uncharacterized protein from Acanthamoeba polyphaga mimivirus (APMV).